Consider the following 608-residue polypeptide: MKWLKQLQSLHTKLVIVYVLLIIIGMQIIGLYFTNNLEKELLDNFKKNITQYAKQLEISIEKVYDEKGSVNAQKDIQNLLSEYANRQEIGEIRFIDKDQIIIATTKQSNRSLINQKANDSSVQKALSLGQSNDHLILKDYGGGKDRVWVYNIPVKVDKKVIGNIYIESKINDVYNQLNNINQIFIVGTAISLLITVILGFFIARTITKPITDMRNQTVEMSRGNYTQRVKIYGNDEIGELALAFNNLSKRVQEAQANTESEKRRLDSVITHMSDGIIATDRRGRIRIVNDMALKMFGMAKEDIIGYYMLSVLSLEDEFKLEEIQENNDSFLLDLNEEEGLIARVNFSTIVQETGFVTGYIAVLHDVTEQQQVERERREFVANVSHELRTPLTSMNSYIEALEEGAWKDEELAPQFLSVTREETERMIRLVNDLLQLSKMDNESDQINKEIIDFNMFINKIINRHEMSAKDTTFIRDIPKKTIFTEFDPDKMTQVFDNVITNAMKYSRGDKRVEFHVKQNPLYNRMTIRIKDNGIGIPINKVDKIFDRFYRVDKARTRKMGGTGLGLAISKEIVEAHNGRIWANSVEGQGTSIFITLPCEVIEDGDWDE.

2 helical membrane-spanning segments follow: residues 14–34 and 183–203; these read LVIV…LYFT and IFIV…FFIA. The HAMP domain occupies 204-256; the sequence is RTITKPITDMRNQTVEMSRGNYTQRVKIYGNDEIGELALAFNNLSKRVQEAQA. Residues 261–331 enclose the PAS domain; that stretch reads EKRRLDSVIT…EIQENNDSFL (71 aa). Residues His271, Asp274, His364, and Glu368 each contribute to the Zn(2+) site. Positions 314–378 constitute a PAC domain; sequence LEDEFKLEEI…QQQVERERRE (65 aa). The Histidine kinase domain occupies 382-600; that stretch reads NVSHELRTPL…SIFITLPCEV (219 aa). His385 is subject to Phosphohistidine; by autocatalysis.

In terms of assembly, forms homodimers. Forms homooligomers. Post-translationally, autophosphorylated.

It is found in the cell membrane. The enzyme catalyses ATP + protein L-histidine = ADP + protein N-phospho-L-histidine.. By zinc. Zinc-binding negatively regulates WalK kinase activity and thus autophosphorylation. Functionally, member of the two-component regulatory system WalK/WalR that regulates genes involved in cell wall metabolism, virulence regulation, biofilm production, oxidative stress resistance and antibiotic resistance via direct or indirect regulation of autolysins. Functions as a sensor protein kinase which is autophosphorylated at a histidine residue in the dimerization domain and transfers its phosphate group to the conserved aspartic acid residue in the regulatory domain of WalR. In turn, WalR binds to the upstream promoter regions of the target genes to positively and negatively regulate their expression. The polypeptide is Sensor protein kinase WalK (walK) (Staphylococcus aureus (strain Newman)).